The chain runs to 231 residues: Elongation factor 1-delta 2 (231 aa).

Ala2 is modified (N-acetylalanine). One can recognise a GST C-terminal domain in the interval 11-73 (SGLKKLDEHL…LRISGVSAEG (63 aa)). Positions 82–136 (SPITEEAVATPPAADSKDTAAEEEDDDDVDLFGEETEEEKKAAEERAASVKASTK) are disordered. A compositionally biased stretch (acidic residues) spans 102–118 (AEEEDDDDVDLFGEETE). A compositionally biased stretch (basic and acidic residues) spans 119–129 (EEKKAAEERAA).

It belongs to the EF-1-beta/EF-1-delta family. In terms of assembly, EF-1 is composed of 4 subunits: alpha, beta (1B-alpha=beta'), delta (1B-beta), and gamma (1B-gamma).

In terms of biological role, EF-1-beta and EF-1-delta stimulate the exchange of GDP bound to EF-1-alpha to GTP. The protein is Elongation factor 1-delta 2 of Arabidopsis thaliana (Mouse-ear cress).